A 201-amino-acid polypeptide reads, in one-letter code: Chromophore lyase CpcT/CpeT (201 aa).

The protein belongs to the CpcT/CpeT biliprotein lyase family.

Its subcellular location is the plastid. It localises to the organellar chromatophore. Covalently attaches a chromophore to Cys residue(s) of phycobiliproteins. This Paulinella chromatophora protein is Chromophore lyase CpcT/CpeT.